The primary structure comprises 1327 residues: Myb-like protein O (1327 aa).

The span at 131-142 (NNNINTTNNNNK) shows a compositional bias: low complexity. 4 disordered regions span residues 131-153 (NNNI…EESN), 263-390 (EEED…DESS), 504-668 (PPQQ…NHES), and 717-770 (KKKK…DNDD). The segment covering 263–283 (EEEDDEDYIPPEEEEDDDEDN) has biased composition (acidic residues). The span at 322–353 (YNNTANNINNNNIGDESDNNNNNNNNINNNSN) shows a compositional bias: low complexity. Over residues 356-374 (DDDDDDDDDNNDDDDDDND) the composition is skewed to acidic residues. Low complexity predominate over residues 511 to 532 (SSSSINSSNTMSSSSSSSSLSK). A compositionally biased stretch (basic residues) spans 533 to 542 (NKLKKKKKEE). Over residues 543–554 (KRKEEKRKEEKR) the composition is skewed to basic and acidic residues. A compositionally biased stretch (basic residues) spans 555 to 577 (KEKKRKKRQSITISKFKKNKKKT). Acidic residues predominate over residues 585-606 (SESDSSSDDSDDSDFYYSDIEE). A compositionally biased stretch (gly residues) spans 607–619 (GGGGNGNGSGSGV). Acidic residues predominate over residues 624–633 (SDNEEGDSSS). Low complexity-rich tracts occupy residues 646–668 (HTNN…NHES) and 722–732 (QSSSSSSSSTI). Over residues 754-770 (NDDEDDNNNNNEDDNDD) the composition is skewed to acidic residues. In terms of domain architecture, HTH myb-type spans 897–953 (NVKLNQLKFTGGEDLLLLMGVKRFGTFNWRIIQKRYFPNKTDDQLFHRYKNLLSHSS). The H-T-H motif DNA-binding region spans 925–949 (WRIIQKRYFPNKTDDQLFHRYKNLL). Residues 959–1010 (KQYLNGAKFTKEEEEKLDGAIKIHGLKWDIISRDYLHWKEPAMLKKFYEKRE) enclose the Myb-like 1 domain. Composition is skewed to low complexity over residues 1061–1118 (NSTN…NENN) and 1144–1160 (PIIE…ETSP). Disordered stretches follow at residues 1061–1122 (NSTN…YEFG) and 1144–1168 (PIIE…PCPI). Residues 1268–1316 (KWTREEDRIILITVKEKGTVDNEIWKSLSDTKIQDKTPDQIMYRYLQLL) form the Myb-like 2 domain.

The protein localises to the nucleus. The sequence is that of Myb-like protein O (mybO) from Dictyostelium discoideum (Social amoeba).